A 566-amino-acid polypeptide reads, in one-letter code: NXPE family member 3 (566 aa).

The N-terminal stretch at 1–32 is a signal peptide; that stretch reads MEKYFPKYVPFFSLLALSGLLYLLWSITSLES. 5 N-linked (GlcNAc...) asparagine glycosylation sites follow: N64, N172, N242, N303, and N344.

Belongs to the NXPE family.

The protein resides in the secreted. The polypeptide is NXPE family member 3 (nxpe3) (Danio rerio (Zebrafish)).